A 288-amino-acid chain; its full sequence is Quinate/shikimate dehydrogenase (288 aa).

Substrate contacts are provided by K71 and D107. Residues 132–135 (AGGA), 155–158 (NRRD), K205, 232–235 (CVYN), and G255 each bind NAD(+).

Belongs to the shikimate dehydrogenase family. In terms of assembly, homodimer.

The enzyme catalyses L-quinate + NAD(+) = 3-dehydroquinate + NADH + H(+). It carries out the reaction L-quinate + NADP(+) = 3-dehydroquinate + NADPH + H(+). It catalyses the reaction shikimate + NADP(+) = 3-dehydroshikimate + NADPH + H(+). The catalysed reaction is shikimate + NAD(+) = 3-dehydroshikimate + NADH + H(+). It participates in metabolic intermediate biosynthesis; chorismate biosynthesis; chorismate from D-erythrose 4-phosphate and phosphoenolpyruvate: step 4/7. In terms of biological role, the actual biological function of YdiB remains unclear, nor is it known whether 3-dehydroshikimate or quinate represents the natural substrate. Catalyzes the reversible NAD-dependent reduction of both 3-dehydroshikimate (DHSA) and 3-dehydroquinate to yield shikimate (SA) and quinate, respectively. It can use both NAD or NADP for catalysis, however it has higher catalytic efficiency with NAD. In Shigella sonnei (strain Ss046), this protein is Quinate/shikimate dehydrogenase.